The primary structure comprises 229 residues: Cytochrome c oxidase subunit 2 (229 aa).

At 1–26 (MSTWANLGLQDSASPLMEQLIFFHDH) the chain is on the mitochondrial intermembrane side. The helical transmembrane segment at 27 to 48 (ALLILVMITVLVGYLMFMLFFN) threads the bilayer. Over 49-62 (SYVNRFLLHGQLIE) the chain is Mitochondrial matrix. The chain crosses the membrane as a helical span at residues 63–82 (MIWTILPAIILLFIAMPSLR). The Mitochondrial intermembrane portion of the chain corresponds to 83–229 (LLYLLDEINE…IKWISNSVNS (147 aa)). Cu cation-binding residues include histidine 161, cysteine 196, glutamate 198, cysteine 200, histidine 204, and methionine 207. Position 198 (glutamate 198) interacts with Mg(2+).

The protein belongs to the cytochrome c oxidase subunit 2 family. In terms of assembly, component of the cytochrome c oxidase (complex IV, CIV), a multisubunit enzyme composed of a catalytic core of 3 subunits and several supernumerary subunits. The complex exists as a monomer or a dimer and forms supercomplexes (SCs) in the inner mitochondrial membrane with ubiquinol-cytochrome c oxidoreductase (cytochrome b-c1 complex, complex III, CIII). It depends on Cu cation as a cofactor.

The protein localises to the mitochondrion inner membrane. It carries out the reaction 4 Fe(II)-[cytochrome c] + O2 + 8 H(+)(in) = 4 Fe(III)-[cytochrome c] + 2 H2O + 4 H(+)(out). In terms of biological role, component of the cytochrome c oxidase, the last enzyme in the mitochondrial electron transport chain which drives oxidative phosphorylation. The respiratory chain contains 3 multisubunit complexes succinate dehydrogenase (complex II, CII), ubiquinol-cytochrome c oxidoreductase (cytochrome b-c1 complex, complex III, CIII) and cytochrome c oxidase (complex IV, CIV), that cooperate to transfer electrons derived from NADH and succinate to molecular oxygen, creating an electrochemical gradient over the inner membrane that drives transmembrane transport and the ATP synthase. Cytochrome c oxidase is the component of the respiratory chain that catalyzes the reduction of oxygen to water. Electrons originating from reduced cytochrome c in the intermembrane space (IMS) are transferred via the dinuclear copper A center (CU(A)) of subunit 2 and heme A of subunit 1 to the active site in subunit 1, a binuclear center (BNC) formed by heme A3 and copper B (CU(B)). The BNC reduces molecular oxygen to 2 water molecules using 4 electrons from cytochrome c in the IMS and 4 protons from the mitochondrial matrix. This Drosophila narragansett (Fruit fly) protein is Cytochrome c oxidase subunit 2 (mt:CoII).